The following is a 101-amino-acid chain: Vacuolar ATPase assembly integral membrane protein VMA21 (101 aa).

Residues 1-25 (MERPDKAALNALQPPEFRNESSLAS) are Cytoplasmic-facing. The chain crosses the membrane as a helical span at residues 26 to 46 (TLKTLLFFTALMITVPIGLYF). At 47-65 (TTKSYIFEGALGMSNRDSY) the chain is on the lumenal side. Residues 66-86 (FYAAIVAVVAVHVVLALFVYV) form a helical membrane-spanning segment. At 87 to 101 (AWNEGSRQWREGKQD) the chain is on the cytoplasmic side.

Belongs to the VMA21 family. In terms of assembly, associates with the V0 complex of the vacuolar ATPase (V-ATPase). Interacts with ATP6AP2.

It is found in the endoplasmic reticulum membrane. It localises to the endoplasmic reticulum-Golgi intermediate compartment membrane. Its subcellular location is the cytoplasmic vesicle. The protein resides in the COPII-coated vesicle membrane. Its function is as follows. Required for the assembly of the V0 complex of the vacuolar ATPase (V-ATPase) in the endoplasmic reticulum. This Homo sapiens (Human) protein is Vacuolar ATPase assembly integral membrane protein VMA21.